Consider the following 396-residue polypeptide: Chorismate synthase (396 aa).

NADP(+) is bound by residues Arg40 and Arg46. Residues 134-136, 257-258, Gly302, 317-321, and Arg343 contribute to the FMN site; these read RSS, QA, and KPIPS.

The protein belongs to the chorismate synthase family. As to quaternary structure, homotetramer. FMNH2 serves as cofactor.

The catalysed reaction is 5-O-(1-carboxyvinyl)-3-phosphoshikimate = chorismate + phosphate. Its pathway is metabolic intermediate biosynthesis; chorismate biosynthesis; chorismate from D-erythrose 4-phosphate and phosphoenolpyruvate: step 7/7. Its function is as follows. Catalyzes the anti-1,4-elimination of the C-3 phosphate and the C-6 proR hydrogen from 5-enolpyruvylshikimate-3-phosphate (EPSP) to yield chorismate, which is the branch point compound that serves as the starting substrate for the three terminal pathways of aromatic amino acid biosynthesis. This reaction introduces a second double bond into the aromatic ring system. This chain is Chorismate synthase, found in Bifidobacterium animalis subsp. lactis (strain AD011).